A 432-amino-acid chain; its full sequence is Trigger factor (432 aa).

The region spanning 161–246 (EDRVTIDFTG…LKKVEERELP (86 aa)) is the PPIase FKBP-type domain.

Belongs to the FKBP-type PPIase family. Tig subfamily. As to quaternary structure, homodimer and monomer. In vivo most of the ribosomes are in complex with monomeric TF. Uncomplexed TF, however, is in a monomer-dimer equilibrium with approximately two thirds of TF existing in a dimeric state.

It localises to the cytoplasm. The enzyme catalyses [protein]-peptidylproline (omega=180) = [protein]-peptidylproline (omega=0). Involved in protein export. Acts as a chaperone by maintaining the newly synthesized protein in an open conformation. Functions as a peptidyl-prolyl cis-trans isomerase. The sequence is that of Trigger factor from Shigella boydii serotype 4 (strain Sb227).